The primary structure comprises 93 residues: Corticostatin 1 (93 aa).

An N-terminal signal peptide occupies residues 1 to 19 (MRTLILLAAILLAALQAQA). The propeptide occupies 20-59 (ELFSVNVDEVLDQQQPGSDQDLVIHLTGEESSALQVPDTK). 3 disulfides stabilise this stretch: cysteine 62/cysteine 90, cysteine 64/cysteine 79, and cysteine 69/cysteine 89.

This sequence belongs to the alpha-defensin family.

It localises to the secreted. Microbicidal activity and inhibits corticotropin (ACTH) stimulated corticosterone production. In Oryctolagus cuniculus (Rabbit), this protein is Corticostatin 1.